The following is a 78-amino-acid chain: uncharacterized protein (78 aa).

The interval 58 to 78 (EANDPEKKIPSTAAKAISLSP) is disordered.

This is an uncharacterized protein from Vaccinia virus (strain Copenhagen) (VACV).